Here is a 397-residue protein sequence, read N- to C-terminus: Acetate kinase 1 (397 aa).

Asn8 provides a ligand contact to Mg(2+). Position 15 (Lys15) interacts with ATP. Arg89 contacts substrate. The Proton donor/acceptor role is filled by Asp146. Residues 206–210, 281–283, and 329–333 contribute to the ATP site; these read HLGNG, DFR, and GVGEN. Glu380 provides a ligand contact to Mg(2+).

This sequence belongs to the acetokinase family. As to quaternary structure, homodimer. Mg(2+) serves as cofactor. The cofactor is Mn(2+).

The protein localises to the cytoplasm. It carries out the reaction acetate + ATP = acetyl phosphate + ADP. The protein operates within metabolic intermediate biosynthesis; acetyl-CoA biosynthesis; acetyl-CoA from acetate: step 1/2. In terms of biological role, catalyzes the formation of acetyl phosphate from acetate and ATP. Can also catalyze the reverse reaction. The protein is Acetate kinase 1 of Listeria monocytogenes serotype 4b (strain F2365).